The sequence spans 109 residues: Nucleoid-associated protein Sbal223_1770 (109 aa).

This sequence belongs to the YbaB/EbfC family. Homodimer.

It localises to the cytoplasm. The protein resides in the nucleoid. Its function is as follows. Binds to DNA and alters its conformation. May be involved in regulation of gene expression, nucleoid organization and DNA protection. This is Nucleoid-associated protein Sbal223_1770 from Shewanella baltica (strain OS223).